We begin with the raw amino-acid sequence, 182 residues long: ATP-dependent protease subunit HslV (182 aa).

The active site involves threonine 10. Residues alanine 166, cysteine 169, and serine 172 each contribute to the Na(+) site.

It belongs to the peptidase T1B family. HslV subfamily. A double ring-shaped homohexamer of HslV is capped on each side by a ring-shaped HslU homohexamer. The assembly of the HslU/HslV complex is dependent on binding of ATP.

The protein resides in the cytoplasm. The enzyme catalyses ATP-dependent cleavage of peptide bonds with broad specificity.. Its activity is regulated as follows. Allosterically activated by HslU binding. Functionally, protease subunit of a proteasome-like degradation complex believed to be a general protein degrading machinery. The chain is ATP-dependent protease subunit HslV from Rickettsia bellii (strain OSU 85-389).